The chain runs to 246 residues: tRNA pseudouridine synthase A (246 aa).

The Nucleophile role is filled by D52. A substrate-binding site is contributed by Y111.

The protein belongs to the tRNA pseudouridine synthase TruA family. As to quaternary structure, homodimer.

It carries out the reaction uridine(38/39/40) in tRNA = pseudouridine(38/39/40) in tRNA. In terms of biological role, formation of pseudouridine at positions 38, 39 and 40 in the anticodon stem and loop of transfer RNAs. The protein is tRNA pseudouridine synthase A of Ehrlichia ruminantium (strain Gardel).